The primary structure comprises 387 residues: 3-hydroxyisobutyryl-CoA hydrolase-like protein 5 (387 aa).

Ala2 carries the post-translational modification N-acetylalanine.

This sequence belongs to the enoyl-CoA hydratase/isomerase family.

The polypeptide is 3-hydroxyisobutyryl-CoA hydrolase-like protein 5 (Arabidopsis thaliana (Mouse-ear cress)).